The sequence spans 161 residues: Protein-export protein SecB (161 aa).

It belongs to the SecB family. In terms of assembly, homotetramer, a dimer of dimers. One homotetramer interacts with 1 SecA dimer.

It localises to the cytoplasm. One of the proteins required for the normal export of preproteins out of the cell cytoplasm. It is a molecular chaperone that binds to a subset of precursor proteins, maintaining them in a translocation-competent state. It also specifically binds to its receptor SecA. In Shewanella putrefaciens (strain CN-32 / ATCC BAA-453), this protein is Protein-export protein SecB.